Reading from the N-terminus, the 380-residue chain is Queuine tRNA-ribosyltransferase (380 aa).

The active-site Proton acceptor is the Asp-95. Substrate contacts are provided by residues Asp-95–Phe-99, Asp-149, Gln-192, and Gly-219. The segment at Gly-250–Ser-256 is RNA binding. The Nucleophile role is filled by Asp-269. The tract at residues Thr-274–Arg-278 is RNA binding; important for wobble base 34 recognition. Zn(2+) contacts are provided by Cys-307, Cys-309, Cys-312, and His-338.

This sequence belongs to the queuine tRNA-ribosyltransferase family. In terms of assembly, homodimer. Within each dimer, one monomer is responsible for RNA recognition and catalysis, while the other monomer binds to the replacement base PreQ1. Zn(2+) is required as a cofactor.

It carries out the reaction 7-aminomethyl-7-carbaguanine + guanosine(34) in tRNA = 7-aminomethyl-7-carbaguanosine(34) in tRNA + guanine. It functions in the pathway tRNA modification; tRNA-queuosine biosynthesis. Functionally, catalyzes the base-exchange of a guanine (G) residue with the queuine precursor 7-aminomethyl-7-deazaguanine (PreQ1) at position 34 (anticodon wobble position) in tRNAs with GU(N) anticodons (tRNA-Asp, -Asn, -His and -Tyr). Catalysis occurs through a double-displacement mechanism. The nucleophile active site attacks the C1' of nucleotide 34 to detach the guanine base from the RNA, forming a covalent enzyme-RNA intermediate. The proton acceptor active site deprotonates the incoming PreQ1, allowing a nucleophilic attack on the C1' of the ribose to form the product. After dissociation, two additional enzymatic reactions on the tRNA convert PreQ1 to queuine (Q), resulting in the hypermodified nucleoside queuosine (7-(((4,5-cis-dihydroxy-2-cyclopenten-1-yl)amino)methyl)-7-deazaguanosine). The sequence is that of Queuine tRNA-ribosyltransferase from Geobacillus thermodenitrificans (strain NG80-2).